The sequence spans 355 residues: 3-isopropylmalate dehydrogenase (355 aa).

Residues arginine 90, arginine 100, arginine 128, and aspartate 222 each coordinate substrate. Mg(2+) is bound by residues aspartate 222, aspartate 246, and aspartate 250. 280–292 (GSAPDIAGKGVAN) serves as a coordination point for NAD(+).

Belongs to the isocitrate and isopropylmalate dehydrogenases family. LeuB type 1 subfamily. Homodimer. It depends on Mg(2+) as a cofactor. Requires Mn(2+) as cofactor.

The protein localises to the cytoplasm. It catalyses the reaction (2R,3S)-3-isopropylmalate + NAD(+) = 4-methyl-2-oxopentanoate + CO2 + NADH. It functions in the pathway amino-acid biosynthesis; L-leucine biosynthesis; L-leucine from 3-methyl-2-oxobutanoate: step 3/4. In terms of biological role, catalyzes the oxidation of 3-carboxy-2-hydroxy-4-methylpentanoate (3-isopropylmalate) to 3-carboxy-4-methyl-2-oxopentanoate. The product decarboxylates to 4-methyl-2 oxopentanoate. This is 3-isopropylmalate dehydrogenase from Cupriavidus pinatubonensis (strain JMP 134 / LMG 1197) (Cupriavidus necator (strain JMP 134)).